The primary structure comprises 375 residues: ORC1-type DNA replication protein 3 (375 aa).

ATP is bound by residues 66–70, Tyr209, and Arg221; that span reads TGKTT.

This sequence belongs to the CDC6/cdc18 family.

Involved in regulation of DNA replication. The polypeptide is ORC1-type DNA replication protein 3 (cdc6c) (Haloarcula marismortui (strain ATCC 43049 / DSM 3752 / JCM 8966 / VKM B-1809) (Halobacterium marismortui)).